A 493-amino-acid polypeptide reads, in one-letter code: Inosine-5'-monophosphate dehydrogenase (493 aa).

2 CBS domains span residues 97-155 (VIID…NAPI) and 159-219 (MTSE…AKDE). Residues aspartate 253 and 303–305 (GIG) each bind NAD(+). Glycine 305 and glycine 307 together coordinate K(+). Serine 308 serves as a coordination point for IMP. Cysteine 310 contributes to the K(+) binding site. Cysteine 310 functions as the Thioimidate intermediate in the catalytic mechanism. IMP-binding positions include 343-345 (DGG), 366-367 (GS), and 390-394 (YRGMG). The active-site Proton acceptor is the arginine 406. Glutamate 421 is a binding site for IMP. 3 residues coordinate K(+): glutamate 475, serine 476, and histidine 477.

It belongs to the IMPDH/GMPR family. As to quaternary structure, homotetramer. It depends on K(+) as a cofactor.

The enzyme catalyses IMP + NAD(+) + H2O = XMP + NADH + H(+). It functions in the pathway purine metabolism; XMP biosynthesis via de novo pathway; XMP from IMP: step 1/1. Mycophenolic acid (MPA) is a non-competitive inhibitor that prevents formation of the closed enzyme conformation by binding to the same site as the amobile flap. In contrast, mizoribine monophosphate (MZP) is a competitive inhibitor that induces the closed conformation. MPA is a potent inhibitor of mammalian IMPDHs but a poor inhibitor of the bacterial enzymes. MZP is a more potent inhibitor of bacterial IMPDH. Its function is as follows. Catalyzes the conversion of inosine 5'-phosphate (IMP) to xanthosine 5'-phosphate (XMP), the first committed and rate-limiting step in the de novo synthesis of guanine nucleotides, and therefore plays an important role in the regulation of cell growth. The chain is Inosine-5'-monophosphate dehydrogenase from Streptococcus pyogenes serotype M3 (strain ATCC BAA-595 / MGAS315).